A 1224-amino-acid polypeptide reads, in one-letter code: DNA-directed RNA polymerase subunit beta (1224 aa).

It belongs to the RNA polymerase beta chain family. The RNAP catalytic core consists of 2 alpha, 1 beta, 1 beta' and 1 omega subunit. When a sigma factor is associated with the core the holoenzyme is formed, which can initiate transcription.

The catalysed reaction is RNA(n) + a ribonucleoside 5'-triphosphate = RNA(n+1) + diphosphate. In terms of biological role, DNA-dependent RNA polymerase catalyzes the transcription of DNA into RNA using the four ribonucleoside triphosphates as substrates. In Pelotomaculum thermopropionicum (strain DSM 13744 / JCM 10971 / SI), this protein is DNA-directed RNA polymerase subunit beta.